Consider the following 346-residue polypeptide: Ribonucleoside-diphosphate reductase subunit beta (346 aa).

Residues glutamate 89, glutamate 120, and histidine 123 each coordinate Fe cation. Tyrosine 129 is an active-site residue. The Fe cation site is built by glutamate 193, glutamate 227, and histidine 230.

This sequence belongs to the ribonucleoside diphosphate reductase small chain family. In terms of assembly, tetramer of two alpha and two beta subunits. The cofactor is Fe cation.

The catalysed reaction is a 2'-deoxyribonucleoside 5'-diphosphate + [thioredoxin]-disulfide + H2O = a ribonucleoside 5'-diphosphate + [thioredoxin]-dithiol. In terms of biological role, provides the precursors necessary for DNA synthesis. Catalyzes the biosynthesis of deoxyribonucleotides from the corresponding ribonucleotides. This is Ribonucleoside-diphosphate reductase subunit beta (nrdB) from Chlamydia pneumoniae (Chlamydophila pneumoniae).